Consider the following 341-residue polypeptide: Phosphoribosylaminoimidazole-succinocarboxamide synthase, chloroplastic (341 aa).

Belongs to the SAICAR synthetase family.

It is found in the plastid. It localises to the chloroplast. The enzyme catalyses 5-amino-1-(5-phospho-D-ribosyl)imidazole-4-carboxylate + L-aspartate + ATP = (2S)-2-[5-amino-1-(5-phospho-beta-D-ribosyl)imidazole-4-carboxamido]succinate + ADP + phosphate + 2 H(+). The protein operates within purine metabolism; IMP biosynthesis via de novo pathway; 5-amino-1-(5-phospho-D-ribosyl)imidazole-4-carboxamide from 5-amino-1-(5-phospho-D-ribosyl)imidazole-4-carboxylate: step 1/2. The chain is Phosphoribosylaminoimidazole-succinocarboxamide synthase, chloroplastic (PUR7) from Vigna aconitifolia (Moth bean).